The sequence spans 372 residues: 4-hydroxy-3-methylbut-2-en-1-yl diphosphate synthase (flavodoxin) (372 aa).

[4Fe-4S] cluster-binding residues include cysteine 270, cysteine 273, cysteine 305, and glutamate 312.

This sequence belongs to the IspG family. [4Fe-4S] cluster is required as a cofactor.

The catalysed reaction is (2E)-4-hydroxy-3-methylbut-2-enyl diphosphate + oxidized [flavodoxin] + H2O + 2 H(+) = 2-C-methyl-D-erythritol 2,4-cyclic diphosphate + reduced [flavodoxin]. It functions in the pathway isoprenoid biosynthesis; isopentenyl diphosphate biosynthesis via DXP pathway; isopentenyl diphosphate from 1-deoxy-D-xylulose 5-phosphate: step 5/6. Functionally, converts 2C-methyl-D-erythritol 2,4-cyclodiphosphate (ME-2,4cPP) into 1-hydroxy-2-methyl-2-(E)-butenyl 4-diphosphate. The sequence is that of 4-hydroxy-3-methylbut-2-en-1-yl diphosphate synthase (flavodoxin) from Citrobacter koseri (strain ATCC BAA-895 / CDC 4225-83 / SGSC4696).